Consider the following 120-residue polypeptide: Probable non-functional immunoglobulin kappa variable 2D-24 (120 aa).

An N-terminal signal peptide occupies residues 1-19 (MRLLAQLLGLLMLWVPGSS). Residues 20-120 (GDIVMTQTPL…YYCTQATQFP (101 aa)) enclose the Ig-like domain. Residues 21-43 (DIVMTQTPLSSPVTLGQPASISF) are framework-1. A complementarity-determining-1 region spans residues 44 to 59 (RSSQSLVHSDGNTYLS). Residues 60-74 (WLQQRPGQPPRLLIY) form a framework-2 region. Positions 75–81 (KVSNRFS) are complementarity-determining-2. The segment at 82–113 (GVPDRFSGSGAGTDFTLKISRVEAEDVGVYYC) is framework-3. The interval 114-120 (TQATQFP) is complementarity-determining-3.

As to quaternary structure, most probably, the immunoglobulin is not assembled due to incorrect folding of light chain. Immunoglobulins are composed of two identical heavy chains and two identical light chains; disulfide-linked.

The protein localises to the secreted. It localises to the cell membrane. Its function is as follows. Probable non-functional open reading frame (ORF) of V region of the variable domain of immunoglobulin light chains. Non-functional ORF generally cannot participate in the synthesis of a productive immunoglobulin chain due to altered V-(D)-J or switch recombination and/or splicing site (at mRNA level) and/or conserved amino acid change (protein level). Immunoglobulins, also known as antibodies, are membrane-bound or secreted glycoproteins produced by B lymphocytes. In the recognition phase of humoral immunity, the membrane-bound immunoglobulins serve as receptors which, upon binding of a specific antigen, trigger the clonal expansion and differentiation of B lymphocytes into immunoglobulins-secreting plasma cells. Secreted immunoglobulins mediate the effector phase of humoral immunity, which results in the elimination of bound antigens. The antigen binding site is formed by the variable domain of one heavy chain, together with that of its associated light chain. Thus, each immunoglobulin has two antigen binding sites with remarkable affinity for a particular antigen. The variable domains are assembled by a process called V-(D)-J rearrangement and can then be subjected to somatic hypermutations which, after exposure to antigen and selection, allow affinity maturation for a particular antigen. The sequence is that of Probable non-functional immunoglobulin kappa variable 2D-24 from Homo sapiens (Human).